We begin with the raw amino-acid sequence, 185 residues long: Ribosome-recycling factor (185 aa).

This sequence belongs to the RRF family.

The protein resides in the cytoplasm. Functionally, responsible for the release of ribosomes from messenger RNA at the termination of protein biosynthesis. May increase the efficiency of translation by recycling ribosomes from one round of translation to another. This is Ribosome-recycling factor from Clostridium perfringens (strain ATCC 13124 / DSM 756 / JCM 1290 / NCIMB 6125 / NCTC 8237 / Type A).